Reading from the N-terminus, the 371-residue chain is MSL complex subunit 3B (371 aa).

2 disordered regions span residues 1–47 (MATL…DERA) and 160–230 (EERA…PQAK). Basic and acidic residues predominate over residues 8 to 47 (PKDDGEGKDEGGSDRGDGDSKPKGKKEVEPHTRREADERA). Residues 44–367 (DERAMRIPIP…CEAHYSSKNP (324 aa)) form the MRG domain. Residues 183 to 193 (SESQAVAGPAA) show a composition bias toward low complexity. The segment covering 206-216 (APRRSTRHSTH) has biased composition (basic residues).

It is found in the nucleus. Probable non-catalytic component of the MSL histone acetyltransferase complex, a multiprotein complex that mediates the majority of histone H4 acetylation at 'Lys-16' (H4K16ac), an epigenetic mark that prevents chromatin compaction. The polypeptide is MSL complex subunit 3B (Mus musculus (Mouse)).